The sequence spans 434 residues: Alpha-enolase (434 aa).

Position 2 is an N-acetylserine (S2). K5 carries the N6-acetyllysine modification. At S27 the chain carries Phosphoserine. Mg(2+) is bound at residue S40. At Y44 the chain carries Phosphotyrosine. The residue at position 60 (K60) is an N6-acetyllysine; alternate. The residue at position 60 (K60) is an N6-succinyllysine; alternate. An N6-acetyllysine mark is found at K64 and K71. K89 carries the N6-acetyllysine; alternate modification. N6-succinyllysine; alternate is present on K89. N6-acetyllysine occurs at positions 92 and 126. Residues H158 and E167 each coordinate substrate. N6-acetyllysine is present on residues K193 and K199. K202 bears the N6-acetyllysine; alternate mark. A Glycyl lysine isopeptide (Lys-Gly) (interchain with G-Cter in SUMO2); alternate cross-link involves residue K202. Residue E210 is the Proton donor of the active site. K228 and K233 each carry N6-acetyllysine; alternate. K228 is subject to N6-succinyllysine; alternate. N6-(2-hydroxyisobutyryl)lysine; alternate is present on K228. An N6-malonyllysine; alternate modification is found at K233. A Mg(2+)-binding site is contributed by D245. Residue S254 is modified to Phosphoserine. K256 is subject to N6-acetyllysine. 2 positions are modified to phosphoserine: S263 and S272. At K281 the chain carries N6-acetyllysine; alternate. K281 is subject to N6-(2-hydroxyisobutyryl)lysine; alternate. Position 285 is an N6-acetyllysine (K285). Y287 carries the post-translational modification Phosphotyrosine. The residue at position 291 (S291) is a Phosphoserine. Mg(2+)-binding residues include E293 and D318. Substrate contacts are provided by E293 and D318. N6-acetyllysine is present on residues K335 and K343. The Proton acceptor role is filled by K343. Substrate contacts are provided by residues 370-373 and K394; that span reads SHRS. Positions 405-434 are required for interaction with PLG; that stretch reads AKYNQLLRIEEELGSKAKFAGRNFRNPLAK. K406 carries the post-translational modification N6-acetyllysine. N6-acetyllysine; alternate is present on K420. N6-succinyllysine; alternate is present on K420. K420 is modified (N6-malonyllysine; alternate).

Belongs to the enolase family. Mammalian enolase is composed of 3 isozyme subunits, alpha, beta and gamma, which can form homodimers or heterodimers which are cell-type and development-specific. ENO1 interacts with PLG in the neuronal plasma membrane and promotes its activation. The C-terminal lysine is required for this binding. Interacts with ENO4 and PGAM2. Interacts with CMTM6. The cofactor is Mg(2+). ISGylated. In terms of processing, lysine 2-hydroxyisobutyrylation (Khib) by p300/EP300 activates the phosphopyruvate hydratase activity.

Its subcellular location is the cytoplasm. It localises to the cell membrane. The enzyme catalyses (2R)-2-phosphoglycerate = phosphoenolpyruvate + H2O. It participates in carbohydrate degradation; glycolysis; pyruvate from D-glyceraldehyde 3-phosphate: step 4/5. Functionally, glycolytic enzyme the catalyzes the conversion of 2-phosphoglycerate to phosphoenolpyruvate. In addition to glycolysis, involved in various processes such as growth control, hypoxia tolerance and allergic responses. May also function in the intravascular and pericellular fibrinolytic system due to its ability to serve as a receptor and activator of plasminogen on the cell surface of several cell-types such as leukocytes and neurons. Stimulates immunoglobulin production. In Macaca fascicularis (Crab-eating macaque), this protein is Alpha-enolase (ENO1).